The chain runs to 261 residues: UPF0177 protein YvdC (261 aa).

6 helical membrane passes run 15–35 (WVIV…IFHL), 43–63 (VLSI…VLFI), 84–104 (LDTV…YLIA), 123–143 (IIIG…FAQI), 197–217 (YFAF…TDLY), and 239–259 (FYLN…IALV).

It belongs to the UPF0177 family.

It is found in the cell membrane. The sequence is that of UPF0177 protein YvdC (yvdC) from Lactococcus lactis subsp. lactis (strain IL1403) (Streptococcus lactis).